We begin with the raw amino-acid sequence, 503 residues long: TGF-beta receptor type-1 (503 aa).

Residues 1-33 form the signal peptide; that stretch reads MEAAVAAPRPRLLLLVLAAAAAAAAALLPGATA. The Extracellular portion of the chain corresponds to 34–126; it reads LQCFCHLCTK…SSPGLGPVEL (93 aa). 5 disulfide bridges follow: cysteine 36–cysteine 54, cysteine 38–cysteine 41, cysteine 48–cysteine 71, cysteine 86–cysteine 100, and cysteine 101–cysteine 106. Residue asparagine 45 is glycosylated (N-linked (GlcNAc...) asparagine). The chain crosses the membrane as a helical span at residues 127-147; it reads AAVIAGPVCFVCISLMLMVYI. The Cytoplasmic portion of the chain corresponds to 148 to 503; sequence CHNRTVIHHR…QLSQQEGIKM (356 aa). Serine 165 is subject to Phosphoserine. A GS domain is found at 175-204; it reads TTLKDLIYDMTTSGSGSGLPLLVQRTIART. Phosphothreonine; by TGFBR2 is present on residues threonine 185 and threonine 186. Residues serine 187, serine 189, and serine 191 each carry the phosphoserine; by TGFBR2 modification. An FKBP1A-binding motif is present at residues 193–194; that stretch reads LP. The region spanning 205–495 is the Protein kinase domain; the sequence is IVLQESIGKG…LRIKKTLSQL (291 aa). ATP is bound by residues 211–219 and lysine 232; that span reads IGKGRFGEV. Lysine 268 is covalently cross-linked (Glycyl lysine isopeptide (Lys-Gly) (interchain with G-Cter in ubiquitin)). Residue aspartate 333 is the Proton acceptor of the active site. Lysine 391 is covalently cross-linked (Glycyl lysine isopeptide (Lys-Gly) (interchain with G-Cter in SUMO)).

This sequence belongs to the protein kinase superfamily. TKL Ser/Thr protein kinase family. TGFB receptor subfamily. In terms of assembly, homodimer; in the endoplasmic reticulum but also at the cell membrane. Heterohexamer; TGFB1, TGFB2 and TGFB3 homodimeric ligands assemble a functional receptor composed of two TGFBR1 and TGFBR2 heterodimers to form a ligand-receptor heterohexamer. The respective affinity of TGBRB1 and TGFBR2 for the ligands may modulate the kinetics of assembly of the receptor and may explain the different biological activities of TGFB1, TGFB2 and TGFB3. Component of a complex composed of TSC22D1 (via N-terminus), TGFBR1 and TGFBR2; the interaction between TSC22D1 and TGFBR1 is inhibited by SMAD7 and promoted by TGFB1. Interacts with CD109; inhibits TGF-beta receptor activation in keratinocytes. Interacts with RBPMS. Interacts (unphosphorylated) with FKBP1A; prevents TGFBR1 phosphorylation by TGFBR2 and stabilizes it in the inactive conformation. Interacts with SMAD2, SMAD3 and ZFYVE9; ZFYVE9 recruits SMAD2 and SMAD3 to the TGF-beta receptor. Interacts with TRAF6 and MAP3K7; induces MAP3K7 activation by TRAF6. Interacts with PARD6A; involved in TGF-beta induced epithelial to mesenchymal transition. Interacts with NEDD4L. Interacts with SMAD7, SMURF1 and SMURF2; SMAD7 recruits NEDD4L, SMURF1 and SMURF2 to the TGF-beta receptor. Interacts with USP15 and VPS39. Interacts with SDCBP (via C-terminus). Interacts with CAV1 and this interaction is impaired in the presence of SDCBP. Interacts with APPL1; interaction is TGF beta dependent; mediates trafficking of the TGFBR1 from the endosomes to the nucleus via microtubules in a TRAF6-dependent manner. Interacts with GPR50; this interaction promotes the constitutive activation of SMAD signaling pathway. Mg(2+) serves as cofactor. The cofactor is Mn(2+). Post-translationally, phosphorylated at basal levels in the absence of ligand. Activated upon phosphorylation by TGFBR2, mainly in the GS domain. Phosphorylation in the GS domain abrogates FKBP1A-binding. In terms of processing, N-Glycosylated. Ubiquitinated; undergoes ubiquitination catalyzed by several E3 ubiquitin ligases including SMURF1, SMURF2 and NEDD4L2. Results in the proteasomal and/or lysosomal degradation of the receptor thereby negatively regulating its activity. Deubiquitinated by USP15, leading to stabilization of the protein and enhanced TGF-beta signal. Its ubiquitination and proteasome-mediated degradation is negatively regulated by SDCBP. Ubiquitinated by BFAR via'Lys-63'-linked ubiquitination at Lys-268, leading to TGF-beta signaling activation. Found in all tissues examined, most abundant in placenta and least abundant in brain and heart. Expressed in a variety of cancer cell lines.

The protein resides in the cell membrane. Its subcellular location is the cell junction. It is found in the tight junction. The protein localises to the cell surface. It localises to the membrane raft. It catalyses the reaction L-threonyl-[receptor-protein] + ATP = O-phospho-L-threonyl-[receptor-protein] + ADP + H(+). It carries out the reaction L-seryl-[receptor-protein] + ATP = O-phospho-L-seryl-[receptor-protein] + ADP + H(+). Kept in an inactive conformation by FKBP1A preventing receptor activation in absence of ligand. CD109 is another inhibitor of the receptor. In terms of biological role, transmembrane serine/threonine kinase forming with the TGF-beta type II serine/threonine kinase receptor, TGFBR2, the non-promiscuous receptor for the TGF-beta cytokines TGFB1, TGFB2 and TGFB3. Transduces the TGFB1, TGFB2 and TGFB3 signal from the cell surface to the cytoplasm and is thus regulating a plethora of physiological and pathological processes including cell cycle arrest in epithelial and hematopoietic cells, control of mesenchymal cell proliferation and differentiation, wound healing, extracellular matrix production, immunosuppression and carcinogenesis. The formation of the receptor complex composed of 2 TGFBR1 and 2 TGFBR2 molecules symmetrically bound to the cytokine dimer results in the phosphorylation and the activation of TGFBR1 by the constitutively active TGFBR2. Activated TGFBR1 phosphorylates SMAD2 which dissociates from the receptor and interacts with SMAD4. The SMAD2-SMAD4 complex is subsequently translocated to the nucleus where it modulates the transcription of the TGF-beta-regulated genes. This constitutes the canonical SMAD-dependent TGF-beta signaling cascade. Also involved in non-canonical, SMAD-independent TGF-beta signaling pathways. For instance, TGFBR1 induces TRAF6 autoubiquitination which in turn results in MAP3K7 ubiquitination and activation to trigger apoptosis. Also regulates epithelial to mesenchymal transition through a SMAD-independent signaling pathway through PARD6A phosphorylation and activation. The sequence is that of TGF-beta receptor type-1 (TGFBR1) from Homo sapiens (Human).